The primary structure comprises 274 residues: Penicillin-insensitive murein endopeptidase (274 aa).

Positions 1 to 19 (MNKTAIALLALLASSASLA) are cleaved as a signal peptide. 3 cysteine pairs are disulfide-bonded: cysteine 44–cysteine 265, cysteine 187–cysteine 235, and cysteine 216–cysteine 223. Residues histidine 110, histidine 113, aspartate 120, aspartate 147, histidine 150, and histidine 211 each contribute to the Zn(2+) site. The interval 227–274 (PLPPPGDGCGAELQSWFEPPKPGTTKPEKKTPPPLPPSCQALLDEHVI) is disordered.

It belongs to the peptidase M74 family. Dimer. Zn(2+) serves as cofactor.

The protein localises to the periplasm. In terms of biological role, murein endopeptidase that cleaves the D-alanyl-meso-2,6-diamino-pimelyl amide bond that connects peptidoglycan strands. Likely plays a role in the removal of murein from the sacculus. The sequence is that of Penicillin-insensitive murein endopeptidase from Escherichia coli O9:H4 (strain HS).